Here is an 87-residue protein sequence, read N- to C-terminus: MPETTTTALDKEQLRELVADVLDLDVAEVTDDADFMEDLDVDSLMALEITVRLEKEYGVRLAEAELTSITSLQGTYELLTSKLGDTR.

The Carrier domain occupies 8–83; the sequence is ALDKEQLREL…GTYELLTSKL (76 aa). Ser-43 is subject to O-(pantetheine 4'-phosphoryl)serine.

In terms of processing, 4'-phosphopantetheine is transferred from CoA to a specific serine of the apo-ACP-like protein.

Acyl carrier protein. The protein is Polyketide-8 synthase acyl carrier protein 2 of Streptomyces avermitilis (strain ATCC 31267 / DSM 46492 / JCM 5070 / NBRC 14893 / NCIMB 12804 / NRRL 8165 / MA-4680).